We begin with the raw amino-acid sequence, 223 residues long: Adenylate kinase (223 aa).

ATP is bound at residue 10 to 15 (GSGKGT). The interval 30–59 (ESGAIFRKHIGGGTELGMKAKEYIDKGELV) is NMP. Residues S31, R36, 57 to 59 (ELV), 84 to 87 (GFPR), and Q91 each bind AMP. The segment at 125–164 (GRRLCENDPNHPNNKFIDAIKPDGDKCRVCGGALSERADD) is LID. R126 serves as a coordination point for ATP. AMP contacts are provided by R161 and R173. G209 provides a ligand contact to ATP.

The protein belongs to the adenylate kinase family. In terms of assembly, monomer.

Its subcellular location is the cytoplasm. The catalysed reaction is AMP + ATP = 2 ADP. It functions in the pathway purine metabolism; AMP biosynthesis via salvage pathway; AMP from ADP: step 1/1. Catalyzes the reversible transfer of the terminal phosphate group between ATP and AMP. Plays an important role in cellular energy homeostasis and in adenine nucleotide metabolism. This is Adenylate kinase from Maridesulfovibrio salexigens (strain ATCC 14822 / DSM 2638 / NCIMB 8403 / VKM B-1763) (Desulfovibrio salexigens).